The primary structure comprises 282 residues: Probable methylxanthine N7-demethylase NdmC (282 aa).

The enzyme catalyses 7-methylxanthine + NADPH + O2 + H(+) = xanthine + formaldehyde + NADP(+) + H2O. It carries out the reaction 7-methylxanthine + NADH + O2 + H(+) = xanthine + formaldehyde + NAD(+) + H2O. Its function is as follows. Involved in the caffeine degradation, which is the essential first step for assimilating the carbon and nitrogen in caffeine. Probably catalyzes the N7-demethylation of 7-methylxanthine to produce xanthine and formaldehyde. The chain is Probable methylxanthine N7-demethylase NdmC from Pseudomonas sp. (strain TJI-51).